Here is a 259-residue protein sequence, read N- to C-terminus: NAP1-related protein 1 (259 aa).

Residues 1 to 15 (MAAAEQKGKKPRTDG) show a composition bias toward basic and acidic residues. A disordered region spans residues 1–20 (MAAAEQKGKKPRTDGAEAEP). Positions 21 to 62 (VDAALLQSIEKLQEIQDEIEKVNEEACDKVLELEQKYNEVRR) form a coiled coil. The tract at residues 228 to 259 (ELLDDDDEVSDDDDEEEDDEDQGEGEEDGEEN) is disordered.

This sequence belongs to the nucleosome assembly protein (NAP) family.

The protein resides in the nucleus. The protein localises to the cytoplasm. Acts as a histone H2A/H2B chaperone in nucleosome assembly. The polypeptide is NAP1-related protein 1 (Oryza sativa subsp. indica (Rice)).